Reading from the N-terminus, the 176-residue chain is Large ribosomal subunit protein eL20 (176 aa).

It belongs to the eukaryotic ribosomal protein eL20 family. Component of the large ribosomal subunit.

It localises to the cytoplasm. In terms of biological role, component of the large ribosomal subunit. The ribosome is a large ribonucleoprotein complex responsible for the synthesis of proteins in the cell. In Salmo salar (Atlantic salmon), this protein is Large ribosomal subunit protein eL20 (rpl18a).